The following is a 166-amino-acid chain: MAQTSSYFMLISCLMFLSQSQGQEAQTELPQARISCPEGTNAYRSYCYYFNEDRETWVDADLYCQNMNSGNLVSVLTQAEGAFVASLIKESGTDDFNVWIGLHDPKKNRRWHWSSGSLVSYKSWGIGAPSSVNPGYCVSLTSSTGFQKWKDVPCEDKFSFVCKFKN.

The first 22 residues, 1–22 (MAQTSSYFMLISCLMFLSQSQG), serve as a signal peptide directing secretion. Residue glutamine 23 is modified to Pyrrolidone carboxylic acid. Residue threonine 27 is glycosylated (O-linked (GalNAc) threonine). Residues 34-164 (ISCPEGTNAY…EDKFSFVCKF (131 aa)) enclose the C-type lectin domain. Disulfide bonds link cysteine 36-cysteine 47, cysteine 64-cysteine 162, and cysteine 137-cysteine 154.

The composition of the O-linked carbohydrate on Thr-27 is complex and varied. In the crystallographic structure, the attached sugar appears to be N-acetylglucosamine, typical of an intracellular protein, rather than N-acetylgalactosamine. As to expression, in pancreatic acinar cells and, in lower levels, in brain. Enhanced expression of PSP-related transcripts and intraneuronal accumulation of PSP-like proteins is found in brain from Alzheimer disease and Down syndrome patients.

The protein resides in the secreted. Its function is as follows. Might act as an inhibitor of spontaneous calcium carbonate precipitation. May be associated with neuronal sprouting in brain, and with brain and pancreas regeneration. This Homo sapiens (Human) protein is Lithostathine-1-alpha (REG1A).